Reading from the N-terminus, the 259-residue chain is 3-methyl-2-oxobutanoate hydroxymethyltransferase (259 aa).

2 residues coordinate Mg(2+): D44 and D83. 3-methyl-2-oxobutanoate is bound by residues 44 to 45 (DS), D83, and K113. Position 115 (E115) interacts with Mg(2+). Residue E183 is the Proton acceptor of the active site.

The protein belongs to the PanB family. Homodecamer; pentamer of dimers. Mg(2+) serves as cofactor.

The protein resides in the cytoplasm. It catalyses the reaction 3-methyl-2-oxobutanoate + (6R)-5,10-methylene-5,6,7,8-tetrahydrofolate + H2O = 2-dehydropantoate + (6S)-5,6,7,8-tetrahydrofolate. It functions in the pathway cofactor biosynthesis; (R)-pantothenate biosynthesis; (R)-pantoate from 3-methyl-2-oxobutanoate: step 1/2. Its function is as follows. Catalyzes the reversible reaction in which hydroxymethyl group from 5,10-methylenetetrahydrofolate is transferred onto alpha-ketoisovalerate to form ketopantoate. This Acaryochloris marina (strain MBIC 11017) protein is 3-methyl-2-oxobutanoate hydroxymethyltransferase.